A 350-amino-acid chain; its full sequence is Methylthioribose-1-phosphate isomerase (350 aa).

The active-site Proton donor is Asp-241.

The protein belongs to the eIF-2B alpha/beta/delta subunits family. MtnA subfamily.

The protein resides in the cytoplasm. It is found in the nucleus. The catalysed reaction is 5-(methylsulfanyl)-alpha-D-ribose 1-phosphate = 5-(methylsulfanyl)-D-ribulose 1-phosphate. It functions in the pathway amino-acid biosynthesis; L-methionine biosynthesis via salvage pathway; L-methionine from S-methyl-5-thio-alpha-D-ribose 1-phosphate: step 1/6. Its function is as follows. Catalyzes the interconversion of methylthioribose-1-phosphate (MTR-1-P) into methylthioribulose-1-phosphate (MTRu-1-P). This chain is Methylthioribose-1-phosphate isomerase, found in Nematostella vectensis (Starlet sea anemone).